The primary structure comprises 105 residues: Thioredoxin (105 aa).

The Thioredoxin domain maps to 1-105; that stretch reads MVNNVTDSSF…SLLDWINKSI (105 aa). A disulfide bridge connects residues Cys-30 and Cys-33.

Belongs to the thioredoxin family.

Its function is as follows. Component of the thioredoxin-thioredoxin reductase system. Participates in various redox reactions through the reversible oxidation of its active center dithiol to a disulfide and catalyzes dithiol-disulfide exchange reactions. This chain is Thioredoxin (trxA), found in Rickettsia prowazekii (strain Madrid E).